A 533-amino-acid chain; its full sequence is Probable protein kinase UbiB (533 aa).

Residues 24-44 form a helical membrane-spanning segment; sequence LILELPMLPWWLRLLGAALPW. Residues 126-494 enclose the Protein kinase domain; it reads RFEREPLASA…WKSSRHDWLG (369 aa). Residues 132 to 140 and Lys154 contribute to the ATP site; that span reads LASASVAQV. Residue Asp289 is the Proton acceptor of the active site. The helical transmembrane segment at 510–530 threads the bilayer; the sequence is LGQQLEAWPAWVMLAGGVFLI.

It belongs to the ABC1 family. UbiB subfamily.

The protein resides in the cell inner membrane. The protein operates within cofactor biosynthesis; ubiquinone biosynthesis [regulation]. Is probably a protein kinase regulator of UbiI activity which is involved in aerobic coenzyme Q (ubiquinone) biosynthesis. The protein is Probable protein kinase UbiB of Pseudomonas paraeruginosa (strain DSM 24068 / PA7) (Pseudomonas aeruginosa (strain PA7)).